The following is a 287-amino-acid chain: Polyamine aminopropyltransferase (287 aa).

The region spanning 5–238 (EIWYETLHAN…GIMTFAWASN (234 aa)) is the PABS domain. Residue glutamine 33 coordinates S-methyl-5'-thioadenosine. 2 residues coordinate spermidine: histidine 64 and aspartate 88. S-methyl-5'-thioadenosine-binding positions include glutamate 108 and 140–141 (DG). Aspartate 158 acts as the Proton acceptor in catalysis. Residue 158 to 161 (DCTD) coordinates spermidine. Proline 165 serves as a coordination point for S-methyl-5'-thioadenosine.

Belongs to the spermidine/spermine synthase family. Homodimer or homotetramer.

It is found in the cytoplasm. The enzyme catalyses S-adenosyl 3-(methylsulfanyl)propylamine + putrescine = S-methyl-5'-thioadenosine + spermidine + H(+). It participates in amine and polyamine biosynthesis; spermidine biosynthesis; spermidine from putrescine: step 1/1. Functionally, catalyzes the irreversible transfer of a propylamine group from the amino donor S-adenosylmethioninamine (decarboxy-AdoMet) to putrescine (1,4-diaminobutane) to yield spermidine. This Pectobacterium carotovorum subsp. carotovorum (strain PC1) protein is Polyamine aminopropyltransferase.